The following is a 447-amino-acid chain: Phosphoglucosamine mutase (447 aa).

S88 (phosphoserine intermediate) is an active-site residue. Positions 88, 231, 233, and 235 each coordinate Mg(2+). S88 carries the post-translational modification Phosphoserine.

This sequence belongs to the phosphohexose mutase family. As to quaternary structure, monomer. Also forms large aggregates. The cofactor is Mg(2+). Activated by phosphorylation. Glucose-1,6-bisphosphate or fructose-1,6-bisphosphate can activate the enzyme in vitro. However, since glucose-1,6-bisphosphate is not believed to form in methanogens, the physiologically relevant activator might be a serine kinase protein.

The catalysed reaction is alpha-D-glucosamine 1-phosphate = D-glucosamine 6-phosphate. Functionally, catalyzes the conversion of glucosamine-6-phosphate to glucosamine-1-phosphate. Also catalyzes the isomerization of glucose-1-phosphate to glucose-6-phosphate, but at a 5-fold lower rate. The polypeptide is Phosphoglucosamine mutase (glmM) (Methanococcus maripaludis (strain DSM 14266 / JCM 13030 / NBRC 101832 / S2 / LL)).